We begin with the raw amino-acid sequence, 271 residues long: MQQFAVFGHPIKHSQSPRIHRLFAQQTGIALSYEAMLAPLDDFPAFAMAFFQQGGRGANVTTPFKEQAWQMADVLTPRARLAGAVNTLHWQNARLLGDNTDGVGLVSDLHRLAMIGDASRVLLLGAGGAARGVILPLLEQGCRIALANRTHARAQALAAAFQAQGAIEALPYDALGTHTFDLIINATASGLQGELPPLPRSIIRPDCACYDMFYRAGATPFLAWVQQQGAVRLADGFGMLVAQAAHAFSLWHGIMPQIAPVLIQLRQEPVG.

Residues 14-16 (SQS) and T61 contribute to the shikimate site. Catalysis depends on K65, which acts as the Proton acceptor. 2 residues coordinate shikimate: N86 and D101. NADP(+) contacts are provided by residues 125–129 (GAGGA), 148–153 (NRTHAR), and M212. Y214 is a shikimate binding site. G236 provides a ligand contact to NADP(+).

This sequence belongs to the shikimate dehydrogenase family. In terms of assembly, homodimer.

The catalysed reaction is shikimate + NADP(+) = 3-dehydroshikimate + NADPH + H(+). It participates in metabolic intermediate biosynthesis; chorismate biosynthesis; chorismate from D-erythrose 4-phosphate and phosphoenolpyruvate: step 4/7. Functionally, involved in the biosynthesis of the chorismate, which leads to the biosynthesis of aromatic amino acids. Catalyzes the reversible NADPH linked reduction of 3-dehydroshikimate (DHSA) to yield shikimate (SA). In Edwardsiella ictaluri (strain 93-146), this protein is Shikimate dehydrogenase (NADP(+)).